The sequence spans 545 residues: Heparanase (545 aa).

The first 37 residues, 1-37 (MLACRKPGLRPPLLLLLPLLGPLGPCSPGTPAAAAPA), serve as a signal peptide directing secretion. 64-66 (DAN) lines the heparan sulfate group pocket. A propeptide spans 112 to 159 (PAFEERSYWLSQSNQDICKSGSIPSDVEEKLRLEWPFQEQVLLREQYQ) (linker peptide). A disulfide bridge connects residues cysteine 129 and cysteine 181. 160–164 (KKFTN) provides a ligand contact to heparan sulfate group. Asparagine 164 and asparagine 219 each carry an N-linked (GlcNAc...) asparagine glycan. Glutamate 227 serves as the catalytic Proton donor. Heparan sulfate group contacts are provided by residues 272–282 (QPRRNTVKMLK), histidine 298, and arginine 305. The segment at 290–419 (EVIDSVTWHH…LLFKKLVGNK (130 aa)) is required for heterodimerization with the heparanase 8 kDa subunit. The Nucleophile role is filled by glutamate 345. Residues 350–352 (FGG) and 391–393 (GNY) contribute to the heparan sulfate group site. Cysteine 439 and cysteine 544 are oxidised to a cystine. Residue asparagine 461 is glycosylated (N-linked (GlcNAc...) asparagine). The segment at 529–545 (FSYGFFVIRNAKVAACI) is required for transferring proheparanase to the Golgi apparatus, secretion and subsequent enzyme activity and for enhancement of PKB/AKT1 phosphorylation.

The protein belongs to the glycosyl hydrolase 79 family. In terms of assembly, heterodimer; heterodimer formation between the 8 kDa and the 50 kDa subunits is required for enzyme activity. Interacts with TF; the interaction, inhibited by heparin, enhances the generation of activated factor X and activates coagulation. Interacts with HRG; the interaction is enhanced at acidic pH, partially inhibits binding of HPSE to cell surface receptors and modulates its enzymatic activity. Interacts with SDC1; the interaction enhances the shedding of SDC1. Interacts with HPSE2. Post-translationally, proteolytically processed. The cleavage of the 65 kDa form leads to the generation of a linker peptide, and the 8 kDa and the 50 kDa products. The active form, the 8/50 kDa heterodimer, is resistant to degradation. Complete removal of the linker peptide appears to be a prerequisite to the complete activation of the enzyme. N-glycosylated. Glycosylation of the 50 kDa subunit appears to be essential for its solubility. Highly expressed in placenta and weakly in the kidney, lung, spleen and uterus.

Its subcellular location is the lysosome membrane. It localises to the secreted. It is found in the nucleus. The enzyme catalyses endohydrolysis of (1-&gt;4)-beta-D-glycosidic bonds of heparan sulfate chains in heparan sulfate proteoglycan.. Its activity is regulated as follows. Inhibited by laminarin sulfate and, to a lower extent, by heparin, sulfamin and EDTA. Activated by calcium and magnesium. Its function is as follows. Endoglycosidase that cleaves heparan sulfate proteoglycans (HSPGs) into heparan sulfate side chains and core proteoglycans. Participates in extracellular matrix (ECM) degradation and remodeling. Selectively cleaves the linkage between a glucuronic acid unit and an N-sulfo glucosamine unit carrying either a 3-O-sulfo or a 6-O-sulfo group. Can also cleave the linkage between a glucuronic acid unit and an N-sulfo glucosamine unit carrying a 2-O-sulfo group, but not linkages between a glucuronic acid unit and a 2-O-sulfated iduronic acid moiety. Essentially inactive at neutral pH but becomes active under acidic conditions such as during tumor invasion and in inflammatory processes. Facilitates cell migration associated with metastasis, wound healing and inflammation. Enhances shedding of syndecans. Acts as a procoagulant by enhancing the generation of activated factor X/F10 in the presence of tissue factor/TF and activated factor VII/F7. Independent of its enzymatic activity, increases cell adhesion to the extracellular matrix (ECM). Enhances AKT1/PKB phosphorylation, possibly via interaction with a lipid raft-resident receptor. Plays a role in the regulation of osteogenesis. Enhances angiogenesis through up-regulation of SRC-mediated activation of VEGF. Implicated in hair follicle inner root sheath differentiation and hair homeostasis. This Bos taurus (Bovine) protein is Heparanase (HPSE).